A 187-amino-acid polypeptide reads, in one-letter code: Translation machinery-associated protein 22 (187 aa).

The region spanning valine 94–tyrosine 165 is the SUI1 domain.

The protein belongs to the DENR family. Interacts with the 40S ribosomal subunit.

It is found in the cytoplasm. This Neurospora crassa (strain ATCC 24698 / 74-OR23-1A / CBS 708.71 / DSM 1257 / FGSC 987) protein is Translation machinery-associated protein 22 (tma-22).